A 37-amino-acid polypeptide reads, in one-letter code: Toxin Bcg III 28.78 (37 aa).

A disulfide bridge connects residues C6 and C31.

The protein resides in the secreted. It localises to the nematocyst. The polypeptide is Toxin Bcg III 28.78 (Bunodosoma cangicum (Sea anemone)).